A 149-amino-acid polypeptide reads, in one-letter code: Probable ubiquitin-conjugating enzyme E2 W (149 aa).

The UBC core domain maps to 4 to 149 (RYAKRLQKEL…VRWMFHDDTV (146 aa)). The Glycyl thioester intermediate role is filled by Cys88.

Belongs to the ubiquitin-conjugating enzyme family.

The catalysed reaction is S-ubiquitinyl-[E1 ubiquitin-activating enzyme]-L-cysteine + [E2 ubiquitin-conjugating enzyme]-L-cysteine = [E1 ubiquitin-activating enzyme]-L-cysteine + S-ubiquitinyl-[E2 ubiquitin-conjugating enzyme]-L-cysteine.. It catalyses the reaction S-ubiquitinyl-[E1 ubiquitin-activating enzyme]-L-cysteine + [acceptor protein]-N-terminal-amino acid = [E1 ubiquitin-activating enzyme]-L-cysteine + N-terminal-ubiquitinyl-[acceptor protein].. The protein operates within protein modification; protein ubiquitination. Its function is as follows. Catalyzes the covalent attachment of ubiquitin to other proteins. The protein is Probable ubiquitin-conjugating enzyme E2 W (ube2w) of Dictyostelium discoideum (Social amoeba).